The following is a 589-amino-acid chain: EZH inhibitory protein (589 aa).

Disordered regions lie at residues 1–46 (MASS…LRLR), 61–548 (AGED…SGPN), and 561–589 (LDSS…KCRG). 2 stretches are compositionally biased toward gly residues: residues 29–38 (GPRGRGGPSG) and 105–114 (PKGGGKADQG). The segment covering 147 to 161 (GAAGPPLPGARGSPA) has biased composition (low complexity). The segment covering 193–204 (LRSSTSQGSGST) has biased composition (polar residues). Low complexity-rich tracts occupy residues 299-308 (RSSASAVSPE), 325-334 (RSSASVVSPE), 351-360 (RSSASVVSPE), and 374-390 (PRAT…TTRS). Ser306 bears the Phosphoserine mark. Positions 426–437 (MRLDLQVDREPE) are enriched in basic and acidic residues. Acidic residues predominate over residues 438–449 (SEAEQEEQELES). Low complexity predominate over residues 450–465 (EPGPSSRPQASRSSSR). The sufficient for interaction with EZH2 stretch occupies residues 482–490 (RRPVRMRAS). A necessary and sufficient for inhibition of PRC2/EED-EZH1 and PRC2/EED-EZH2 complex activity region spans residues 484–503 (PVRMRASSPSPPGRLYPLPK). Positions 509-547 (VHSPSSSSSESSSVSSSHSPLNKAPDPGSSPPLSSLSGP) are enriched in low complexity. A compositionally biased stretch (basic and acidic residues) spans 575–589 (AAPHTREEEDKKCRG).

Interacts with PRC2/EED-EZH1 complex member EZH1 and with PRC2/EED-EZH2 complex member EZH2; the interaction blocks EZH1/EZH2 methyltransferase activity. Interacts (via C-terminus) with SUZ12 which is a member of the PRC2/EED-EZH1 and PRC2/EED-EZH2 complexes. As to expression, highly expressed in ovary with lower expression in testis and very low levels in other tissues tested including prostate, brain, kidney, spleen and liver. During spermatogenesis, expressed mainly in spermatogonia with very low expression in spermatocytes I and II.

Its subcellular location is the nucleus. It is found in the cytoplasm. Its function is as follows. Inhibits PRC2/EED-EZH1 and PRC2/EED-EZH2 complex function by inhibiting EZH1/EZH2 methyltransferase activity, thereby causing down-regulation of histone H3 trimethylation at 'Lys-27' (H3K27me3). Probably inhibits methyltransferase activity by limiting the stimulatory effect of cofactors such as AEBP2 and JARID2. Inhibits H3K27me3 deposition during spermatogenesis and oogenesis. This Mus musculus (Mouse) protein is EZH inhibitory protein.